Here is a 657-residue protein sequence, read N- to C-terminus: Protein mono-ADP-ribosyltransferase TIPARP (657 aa).

Positions 1–10 (MEVETTEPEP) are enriched in acidic residues. Residues 1 to 22 (MEVETTEPEPDCVVQPPSPSDD) are disordered. Cysteine 39 bears the ADP-ribosylcysteine mark. A Nuclear localization signal motif is present at residues 41 to 48 (KKKQEQKR). Positions 121 to 154 (QLPEAHPSTDAPEQGVPIQDHSFPPETISGTVAD) are disordered. Residues 238–265 (ENGIEICMDFLQGTCIYGRDCLKHHTVL) form a C3H1-type zinc finger. In terms of domain architecture, WWE spans 333–411 (STPPCSNSNS…RRPLFRSCFI (79 aa)). The 209-residue stretch at 449-657 (YPETWVYMHP…YEEVSNTVSI (209 aa)) folds into the PARP catalytic domain.

This sequence belongs to the ARTD/PARP family. Interacts with AHR. Post-translationally, auto-mono-ADP-ribosylated. Ubiquitously expressed.

It localises to the nucleus. It carries out the reaction L-aspartyl-[protein] + NAD(+) = 4-O-(ADP-D-ribosyl)-L-aspartyl-[protein] + nicotinamide. The catalysed reaction is L-glutamyl-[protein] + NAD(+) = 5-O-(ADP-D-ribosyl)-L-glutamyl-[protein] + nicotinamide. The enzyme catalyses L-cysteinyl-[protein] + NAD(+) = S-(ADP-D-ribosyl)-L-cysteinyl-[protein] + nicotinamide + H(+). In terms of biological role, ADP-ribosyltransferase that mediates mono-ADP-ribosylation of glutamate, aspartate and cysteine residues on target proteins. Acts as a negative regulator of AHR by mediating mono-ADP-ribosylation of AHR, leading to inhibit transcription activator activity of AHR. This Mus musculus (Mouse) protein is Protein mono-ADP-ribosyltransferase TIPARP.